The chain runs to 1052 residues: Fibroblast growth factor receptor homolog 2 (1052 aa).

Residues 1-19 form the signal peptide; sequence MAKVPITLVMIIAIVSAAA. Topologically, residues 20 to 600 are extracellular; the sequence is DLGCDYGHHR…EIYALLHAHP (581 aa). 3 Ig-like C2-type domains span residues 23–117, 124–230, and 240–340; these read CDYG…IASF, PALP…PTQL, and PMLK…RTVA. Residues Cys30 and Cys90 are joined by a disulfide bond. Asn99, Asn137, Asn175, Asn181, Asn249, and Asn257 each carry an N-linked (GlcNAc...) asparagine glycan. Residues Cys164 and Cys217 are joined by a disulfide bond. Cys262 and Cys329 form a disulfide bridge. A compositionally biased stretch (low complexity) spans 358 to 372; that stretch reads TTTTTVASPIPTAST. The tract at residues 358-393 is disordered; the sequence is TTTTTVASPIPTASTGEDNDDDVENPAAEASGGVGP. Ig-like C2-type domains are found at residues 393 to 478 and 487 to 585; these read PPVF…FSVQ and PIIV…RVVS. Cys416 and Cys462 are oxidised to a cystine. N-linked (GlcNAc...) asparagine glycosylation is found at Asn423, Asn444, Asn494, Asn500, Asn526, Asn541, Asn546, Asn555, and Asn576. A disulfide bond links Cys507 and Cys566. A helical membrane pass occupies residues 601 to 626; sequence LGFTLAAITIVALFLLGSAFITFMLR. The Cytoplasmic portion of the chain corresponds to 627-1052; sequence RLRREKLLKL…LRYQYTYKFN (426 aa). In terms of domain architecture, Protein kinase spans 712–1000; that stretch reads LSLGSILGEG…ELVESFDGIL (289 aa). ATP-binding positions include 718 to 726 and Lys748; that span reads LGEGAFGRV. The active-site Proton acceptor is the Asp864. Residue Tyr895 is modified to Phosphotyrosine; by autocatalysis. The tract at residues 1017–1038 is disordered; sequence PMLETPPSSGDEDDGSDTETFR.

This sequence belongs to the protein kinase superfamily. Tyr protein kinase family. Fibroblast growth factor receptor subfamily. In terms of tissue distribution, during embryogenesis, expression is seen in mesoderm, endodermal precursor cells, CNS midline cells and trachea and salivary duct ectodermal cells.

The protein resides in the membrane. The catalysed reaction is L-tyrosyl-[protein] + ATP = O-phospho-L-tyrosyl-[protein] + ADP + H(+). Its function is as follows. May be required for patterning of muscle precursor cells: generation of mesodermal and endodermal layers, invaginations of various types of cells, and CNS formation. Essential for the ability of the migrating tracheal and midline cells to recognize external guiding cues. The chain is Fibroblast growth factor receptor homolog 2 (btl) from Drosophila melanogaster (Fruit fly).